A 526-amino-acid chain; its full sequence is Organic cation/carnitine transporter 4 (526 aa).

At 1–52 (MESPEDRNGNDVRQPLLEKIPVKKEAEGEERLCIDEMLQRYCGEFGRWQLKH) the chain is on the cytoplasmic side. The helical transmembrane segment at 53-73 (FVLTCIAWALEAFHTMVMIFA) threads the bilayer. At 74-123 (DQEPEWRCVGSDCRVGSLNCELDPSSWEWTAGKGSSTVSEWGLICGDKYK) the chain is on the extracellular side. A helical membrane pass occupies residues 124 to 144 (VGLVQALFFAGCMIGAGVFGH). At 145 to 153 (LSDSKLGRK) the chain is on the cytoplasmic side. A helical membrane pass occupies residues 154 to 174 (GSLTVVCIINAIFGIATAFSP). Residues 175–179 (NYWTY) lie on the Extracellular side of the membrane. Residues 180–200 (VVLRFLTGFSTGGVGLTAFVL) form a helical membrane-spanning segment. An ATP-binding site is contributed by 201–208 (ATEPIGPS). Topologically, residues 201–214 (ATEPIGPSKRGVAG) are cytoplasmic. A helical transmembrane segment spans residues 215 to 235 (MSTFYFFSAGIAVLSGIAYVF). Over 236-240 (RSWRE) the chain is Extracellular. Residues 241–261 (LFIVSSLPSLLFLLIVIPFIS) traverse the membrane as a helical segment. The Cytoplasmic portion of the chain corresponds to 262 to 331 (ESPRWYLVRG…ILSPLMRMRL (70 aa)). A helical transmembrane segment spans residues 332–352 (VISVAISFTVSIVYYGLSLNV). At 353 to 360 (GNLKTNLY) the chain is on the extracellular side. Residues 361 to 381 (LNVFVNAVSEMPAFAITAVLL) traverse the membrane as a helical segment. Residues 382 to 390 (DKYGRKPLS) lie on the Cytoplasmic side of the membrane. The chain crosses the membrane as a helical span at residues 391–411 (IGTQWFSCVFCLVGFSVWGAG). The Extracellular portion of the chain corresponds to 412–418 (PWKSVRM). The helical transmembrane segment at 419 to 439 (VSGVLGIFGMAGTYNLLFIYI) threads the bilayer. The Cytoplasmic portion of the chain corresponds to 440–451 (AELFPTVVRNAA). Residues 452–472 (LGCATQAAQMGAILAPFVVVL) traverse the membrane as a helical segment. The Extracellular portion of the chain corresponds to 473 to 475 (GEE). The helical transmembrane segment at 476-496 (LPFGVFAVCGLVGGGLAFYLP) threads the bilayer. Residues 497-526 (ETLNKPLYDTMFGMHEAESESNRERGEVIC) are Cytoplasmic-facing.

This sequence belongs to the major facilitator (TC 2.A.1) superfamily. Organic cation transporter (TC 2.A.1.19) family. Mostly expressed in siliques, and, to a lower extent, in stems, leaves, flowers and siliques. Present in pollen. In the stems of secondary inflorescences present in the phloem cells and xylem parenchyma cells.

It is found in the vacuole membrane. Its function is as follows. High affinity carnitine transporter involved in the active cellular uptake of carnitine. Also transports organic cations. In Arabidopsis thaliana (Mouse-ear cress), this protein is Organic cation/carnitine transporter 4 (OCT4).